A 198-amino-acid chain; its full sequence is dITP/XTP pyrophosphatase (198 aa).

Position 8–13 (8–13) interacts with substrate; it reads TKNKGK. The active-site Proton acceptor is Asp69. Mg(2+) is bound at residue Asp69. Residues Ser70, 152–155, Lys175, and 180–181 each bind substrate; these read FGYD and HR.

Belongs to the HAM1 NTPase family. Homodimer. Mg(2+) is required as a cofactor.

The catalysed reaction is XTP + H2O = XMP + diphosphate + H(+). It carries out the reaction dITP + H2O = dIMP + diphosphate + H(+). It catalyses the reaction ITP + H2O = IMP + diphosphate + H(+). Pyrophosphatase that catalyzes the hydrolysis of nucleoside triphosphates to their monophosphate derivatives, with a high preference for the non-canonical purine nucleotides XTP (xanthosine triphosphate), dITP (deoxyinosine triphosphate) and ITP. Seems to function as a house-cleaning enzyme that removes non-canonical purine nucleotides from the nucleotide pool, thus preventing their incorporation into DNA/RNA and avoiding chromosomal lesions. The protein is dITP/XTP pyrophosphatase of Shouchella clausii (strain KSM-K16) (Alkalihalobacillus clausii).